The sequence spans 129 residues: Small ribosomal subunit protein uS11 (129 aa).

Belongs to the universal ribosomal protein uS11 family. In terms of assembly, part of the 30S ribosomal subunit. Interacts with proteins S7 and S18. Binds to IF-3.

In terms of biological role, located on the platform of the 30S subunit, it bridges several disparate RNA helices of the 16S rRNA. Forms part of the Shine-Dalgarno cleft in the 70S ribosome. This Staphylococcus haemolyticus (strain JCSC1435) protein is Small ribosomal subunit protein uS11.